Here is a 247-residue protein sequence, read N- to C-terminus: Probable transcriptional regulatory protein GAU_0635 (247 aa).

It belongs to the TACO1 family.

Its subcellular location is the cytoplasm. The protein is Probable transcriptional regulatory protein GAU_0635 of Gemmatimonas aurantiaca (strain DSM 14586 / JCM 11422 / NBRC 100505 / T-27).